The sequence spans 315 residues: Small ribosomal subunit protein mS45 (315 aa).

The N-terminal 66 residues, 1 to 66 (MRNSVEFSQL…SKYVACNSRS (66 aa)), are a transit peptide targeting the mitochondrion.

It belongs to the mitochondrion-specific ribosomal protein mS45 family. As to quaternary structure, component of the mitochondrial small ribosomal subunit (mt-SSU). Mature yeast 74S mitochondrial ribosomes consist of a small (37S) and a large (54S) subunit. The 37S small subunit contains a 15S ribosomal RNA (15S mt-rRNA) and at least 32 different proteins. The 54S large subunit contains a 21S rRNA (21S mt-rRNA) and at least 45 different proteins.

Its subcellular location is the mitochondrion. Its function is as follows. Component of the mitochondrial ribosome (mitoribosome), a dedicated translation machinery responsible for the synthesis of mitochondrial genome-encoded proteins, including at least some of the essential transmembrane subunits of the mitochondrial respiratory chain. The mitoribosomes are attached to the mitochondrial inner membrane and translation products are cotranslationally integrated into the membrane. Required for mitochondrial protein synthesis. Has a role in mitochondrial integrity and cell respiration. This is Small ribosomal subunit protein mS45 (bot1) from Schizosaccharomyces pombe (strain 972 / ATCC 24843) (Fission yeast).